Consider the following 214-residue polypeptide: Riboflavin kinase (214 aa).

Residues 1-26 are disordered; sequence MRPDGPRDPVAGPDSGPEPPYPVRLS. Threonine 44 and asparagine 46 together coordinate Mg(2+). The active-site Nucleophile is the glutamate 116.

It belongs to the flavokinase family. The cofactor is Zn(2+). Mg(2+) serves as cofactor.

The enzyme catalyses riboflavin + ATP = FMN + ADP + H(+). It participates in cofactor biosynthesis; FMN biosynthesis; FMN from riboflavin (ATP route): step 1/1. Its function is as follows. Catalyzes the phosphorylation of riboflavin (vitamin B2) to form flavin mononucleotide (FMN) coenzyme. This chain is Riboflavin kinase (fmn1), found in Aspergillus fumigatus (strain ATCC MYA-4609 / CBS 101355 / FGSC A1100 / Af293) (Neosartorya fumigata).